The chain runs to 269 residues: Formamidopyrimidine-DNA glycosylase (269 aa).

Residue Pro2 is the Schiff-base intermediate with DNA of the active site. The active-site Proton donor is Glu3. The Proton donor; for beta-elimination activity role is filled by Lys57. DNA-binding residues include His90, Arg109, and Lys150. The FPG-type zinc-finger motif lies at 235–269 (QVYGRKGEPCRVCGTPIVATKHAQRATFYCRQCQK). Catalysis depends on Arg259, which acts as the Proton donor; for delta-elimination activity.

This sequence belongs to the FPG family. In terms of assembly, monomer. It depends on Zn(2+) as a cofactor.

It carries out the reaction Hydrolysis of DNA containing ring-opened 7-methylguanine residues, releasing 2,6-diamino-4-hydroxy-5-(N-methyl)formamidopyrimidine.. The catalysed reaction is 2'-deoxyribonucleotide-(2'-deoxyribose 5'-phosphate)-2'-deoxyribonucleotide-DNA = a 3'-end 2'-deoxyribonucleotide-(2,3-dehydro-2,3-deoxyribose 5'-phosphate)-DNA + a 5'-end 5'-phospho-2'-deoxyribonucleoside-DNA + H(+). Its function is as follows. Involved in base excision repair of DNA damaged by oxidation or by mutagenic agents. Acts as a DNA glycosylase that recognizes and removes damaged bases. Has a preference for oxidized purines, such as 7,8-dihydro-8-oxoguanine (8-oxoG). Has AP (apurinic/apyrimidinic) lyase activity and introduces nicks in the DNA strand. Cleaves the DNA backbone by beta-delta elimination to generate a single-strand break at the site of the removed base with both 3'- and 5'-phosphates. The protein is Formamidopyrimidine-DNA glycosylase of Escherichia coli O157:H7.